We begin with the raw amino-acid sequence, 264 residues long: S-adenosylmethionine decarboxylase proenzyme (264 aa).

Catalysis depends on serine 112, which acts as the Schiff-base intermediate with substrate; via pyruvic acid. Serine 112 bears the Pyruvic acid (Ser); by autocatalysis mark. Histidine 117 serves as the catalytic Proton acceptor; for processing activity. Cysteine 140 acts as the Proton donor; for catalytic activity in catalysis.

It belongs to the prokaryotic AdoMetDC family. Type 2 subfamily. As to quaternary structure, heterooctamer of four alpha and four beta chains arranged as a tetramer of alpha/beta heterodimers. The cofactor is pyruvate. Is synthesized initially as an inactive proenzyme. Formation of the active enzyme involves a self-maturation process in which the active site pyruvoyl group is generated from an internal serine residue via an autocatalytic post-translational modification. Two non-identical subunits are generated from the proenzyme in this reaction, and the pyruvate is formed at the N-terminus of the alpha chain, which is derived from the carboxyl end of the proenzyme. The post-translation cleavage follows an unusual pathway, termed non-hydrolytic serinolysis, in which the side chain hydroxyl group of the serine supplies its oxygen atom to form the C-terminus of the beta chain, while the remainder of the serine residue undergoes an oxidative deamination to produce ammonia and the pyruvoyl group blocking the N-terminus of the alpha chain.

The enzyme catalyses S-adenosyl-L-methionine + H(+) = S-adenosyl 3-(methylsulfanyl)propylamine + CO2. It functions in the pathway amine and polyamine biosynthesis; S-adenosylmethioninamine biosynthesis; S-adenosylmethioninamine from S-adenosyl-L-methionine: step 1/1. Its function is as follows. Catalyzes the decarboxylation of S-adenosylmethionine to S-adenosylmethioninamine (dcAdoMet), the propylamine donor required for the synthesis of the polyamines spermine and spermidine from the diamine putrescine. This is S-adenosylmethionine decarboxylase proenzyme from Citrobacter koseri (strain ATCC BAA-895 / CDC 4225-83 / SGSC4696).